A 403-amino-acid polypeptide reads, in one-letter code: Signal-transducing adaptor protein 2 (403 aa).

The region spanning 18–130 (PSHYYESFLE…VPTDLTLLPG (113 aa)) is the PH domain. At tyrosine 22 the chain carries Phosphotyrosine; by SRC. The 116-residue stretch at 133 to 248 (YMMSEVLAKE…KALVPFLLDE (116 aa)) folds into the SH2 domain. Residue tyrosine 250 is modified to Phosphotyrosine; by PTK6. The disordered stretch occupies residues 270–308 (APSAPGPGPAPCTGGPKPLSPASSQDKLPPLPPLPNQEE). Tyrosine 310 is subject to Phosphotyrosine. At tyrosine 322 the chain carries Phosphotyrosine; by SRC. The segment at 331-374 (SWPVILKPKKLPKPPAKLPKPPVGPKPEPKVFNGGLGRKLPVSS) is disordered. Positions 343–356 (KPPAKLPKPPVGPK) are enriched in pro residues. Positions 382–402 (AGLADMTAELQKKLEKRRALE) form a coiled coil.

As to quaternary structure, interacts with PTK6 and CSF1R. Phosphorylated on tyrosine. Tyr-250 may be important for interaction with kinases. Phosphorylated by PTK6 at Tyr-250 modulates PTK6-mediated STAT3 activation. Tyr-22 and Tyr-322 appears to be phosphorylated by SRC. In terms of tissue distribution, widely expressed.

The protein localises to the cytoplasm. Substrate of protein kinase PTK6. May play a regulatory role in the acute-phase response in systemic inflammation and may modulate STAT3 activity. The protein is Signal-transducing adaptor protein 2 (STAP2) of Homo sapiens (Human).